The following is a 961-amino-acid chain: Lon protease homolog, mitochondrial (961 aa).

The transit peptide at 1-67 (MAGGTGCVRL…SPAAAGHWRG (67 aa)) directs the protein to the mitochondrion. Disordered stretches follow at residues 76 to 103 (GGGA…GSAG) and 220 to 262 (QLEV…VVVG). The Lon N-terminal domain maps to 125 to 371 (LPLIAVTRNP…KALSLLKKEF (247 aa)). The span at 235 to 244 (KLRKKPKRGK) shows a compositional bias: basic residues. A compositionally biased stretch (basic and acidic residues) spans 245–257 (KEAEEDGATKRPL). 524 to 531 (GPPGVGKT) contributes to the ATP binding site. The 192-residue stretch at 760-951 (VTPPGVVMGL…REIFDIAFPE (192 aa)) folds into the Lon proteolytic domain. Positions 784-801 (SLRRPRDRDSDKGDKDGS) are enriched in basic and acidic residues. A disordered region spans residues 784–803 (SLRRPRDRDSDKGDKDGSLE). Residues Ser-857 and Lys-900 contribute to the active site.

The protein belongs to the peptidase S16 family. As to quaternary structure, homohexamer. Organized in a ring with a central cavity. The ATP-binding and proteolytic domains (AP-domain) form a hexameric chamber, while the N-terminal domain is arranged as a trimer of dimers. DNA and RNA binding is stimulated by substrate and inhibited by ATP binding. Interacts with TWNK and mitochondrial DNA polymerase subunit POLG.

It localises to the mitochondrion matrix. The enzyme catalyses Hydrolysis of proteins in presence of ATP.. In terms of biological role, ATP-dependent serine protease that mediates the selective degradation of misfolded, unassembled or oxidatively damaged polypeptides as well as certain short-lived regulatory proteins in the mitochondrial matrix. Endogenous substrates include mitochondrial steroidogenic acute regulatory (StAR) protein, DELE1, helicase Twinkle (TWNK) and the large ribosomal subunit protein MRPL32/bL32m. MRPL32/bL32m is protected from degradation by LONP1 when it is bound to a nucleic acid (RNA), but TWNK is not. May also have a chaperone function in the assembly of inner membrane protein complexes. Participates in the regulation of mitochondrial gene expression and in the maintenance of the integrity of the mitochondrial genome. Binds to mitochondrial promoters and RNA in a single-stranded, site-specific, and strand-specific manner. May regulate mitochondrial DNA replication and/or gene expression using site-specific, single-stranded DNA binding to target the degradation of regulatory proteins binding to adjacent sites in mitochondrial promoters. In Bos taurus (Bovine), this protein is Lon protease homolog, mitochondrial.